The chain runs to 384 residues: Guanine nucleotide-binding protein alpha-2 subunit (384 aa).

The segment at 1-23 is disordered; that stretch reads MGLVCSRNRRYRDSDPEENAQAA. The N-myristoyl glycine moiety is linked to residue glycine 2. Residue cysteine 5 is the site of S-palmitoyl cysteine attachment. One can recognise a G-alpha domain in the interval 38 to 384; the sequence is HIQKLLLLGA…RRNLFEAGLL (347 aa). Positions 41–54 are G1 motif; it reads KLLLLGAGESGKST. GTP is bound by residues glutamate 49, serine 50, glycine 51, lysine 52, serine 53, threonine 54, aspartate 163, leucine 188, tyrosine 189, threonine 194, glycine 222, asparagine 288, lysine 289, aspartate 291, and alanine 356. Position 53 (serine 53) interacts with Mg(2+). The segment at 186 to 194 is G2 motif; the sequence is DVLYARVRT. Threonine 194 contributes to the Mg(2+) binding site. Residues 215–224 form a G3 motif region; that stretch reads YRLFDVGGQR. The G4 motif stretch occupies residues 284–291; sequence MLFLNKFD. Residues 354-359 form a G5 motif region; sequence TTALDQ.

Belongs to the G-alpha family. In terms of assembly, g proteins are composed of 3 units; alpha, beta and gamma. The alpha chain contains the guanine nucleotide binding site. It depends on Mg(2+) as a cofactor.

Its function is as follows. Guanine nucleotide-binding proteins (G proteins) are involved as modulators or transducers in various transmembrane signaling systems. This is Guanine nucleotide-binding protein alpha-2 subunit (GPA2) from Pisum sativum (Garden pea).